Reading from the N-terminus, the 87-residue chain is uncharacterized protein (87 aa).

Residues 4–87 (SIIEITNIKK…KPKGNITIKI (84 aa)) enclose the 2Fe-2S ferredoxin-type domain. [2Fe-2S] cluster-binding residues include C38, C43, C46, and C75.

[2Fe-2S] cluster is required as a cofactor.

This is an uncharacterized protein from Buchnera aphidicola subsp. Acyrthosiphon pisum (strain APS) (Acyrthosiphon pisum symbiotic bacterium).